Here is a 100-residue protein sequence, read N- to C-terminus: Small ribosomal subunit protein uS14c (100 aa).

It belongs to the universal ribosomal protein uS14 family. In terms of assembly, part of the 30S ribosomal subunit.

The protein resides in the plastid. The protein localises to the chloroplast. In terms of biological role, binds 16S rRNA, required for the assembly of 30S particles. The polypeptide is Small ribosomal subunit protein uS14c (Pleurastrum terricola (Filamentous green alga)).